An 882-amino-acid chain; its full sequence is Valine--tRNA ligase (882 aa).

Residues 45-55 (PNVTGSLHIGH) carry the 'HIGH' region motif. The 'KMSKS' region motif lies at 525-529 (KFSKS). Lys-528 contacts ATP. Residues 812–881 (EGLIDVAKEK…VLKKGIQNLA (70 aa)) adopt a coiled-coil conformation.

Belongs to the class-I aminoacyl-tRNA synthetase family. ValS type 1 subfamily. Monomer.

The protein localises to the cytoplasm. The enzyme catalyses tRNA(Val) + L-valine + ATP = L-valyl-tRNA(Val) + AMP + diphosphate. Catalyzes the attachment of valine to tRNA(Val). As ValRS can inadvertently accommodate and process structurally similar amino acids such as threonine, to avoid such errors, it has a 'posttransfer' editing activity that hydrolyzes mischarged Thr-tRNA(Val) in a tRNA-dependent manner. This is Valine--tRNA ligase from Leptospira interrogans serogroup Icterohaemorrhagiae serovar copenhageni (strain Fiocruz L1-130).